Consider the following 545-residue polypeptide: MKQEDNQGVCAHQDSEDKGMGSDFEDSEDREGDPEEREMGSNPHDTNKREGHPEPEMGSNPQDSRHREAVPDICTEGQLSEEEGVSVRGEEDDQSGVADMAMFPGLSESDSISRSLREDDDESAGENRLEEEEEQPAPPVLPWRRHLSLGSRHRGDKPAHRRFHRLHHPMAVDLGELDSLVASIMDAPTICPDCGESFSPGAAFLQHQRIHRLAEAAAAASLEPFGLAGECDAMVGMMGVGVAGGFGAGPPLARPPREKPFRCGECGKGFSRNTYLTNHLRLHTGERPNLCADCGKSFSWRADLLKHRRLHTGEKPYPCPECGEAFSLSSHLLSHRRAHAAASGAGAAALRPFACGECGKGFVRRSHLANHQRIHTGEKPHGCGECGKRFSWRSDLVKHQRVHTGEKPYMCSECGETFSVSSHLFTHKRTHSGERPYVCRECGKGFGRNSHLVNHLRVHTGEKPFRCGQCEKRFSDFSTLTQHQRTHTGEKPYTCIECGKSFIQSSHLIRHRRIHTGNKPHKCAGCGKGFRYKTHLAQHQKLHLC.

Residues 1-143 (MKQEDNQGVC…EQPAPPVLPW (143 aa)) form a disordered region. Lys-2 is covalently cross-linked (Glycyl lysine isopeptide (Lys-Gly) (interchain with G-Cter in SUMO2)). Over residues 23–36 (DFEDSEDREGDPEE) the composition is skewed to acidic residues. The segment covering 45-55 (DTNKREGHPEP) has biased composition (basic and acidic residues). Acidic residues-rich tracts occupy residues 79–94 (LSEEEGVSVRGEEDDQ) and 118–135 (EDDDESAGENRLEEEEEQ). 11 consecutive C2H2-type zinc fingers follow at residues 189–211 (TICPDCGESFSPGAAFLQHQRIH), 261–283 (FRCGECGKGFSRNTYLTNHLRLH), 289–311 (NLCADCGKSFSWRADLLKHRRLH), 317–339 (YPCPECGEAFSLSSHLLSHRRAH), 353–375 (FACGECGKGFVRRSHLANHQRIH), 381–403 (HGCGECGKRFSWRSDLVKHQRVH), 409–431 (YMCSECGETFSVSSHLFTHKRTH), 437–459 (YVCRECGKGFGRNSHLVNHLRVH), 465–487 (FRCGQCEKRFSDFSTLTQHQRTH), 493–515 (YTCIECGKSFIQSSHLIRHRRIH), and 521–543 (HKCAGCGKGFRYKTHLAQHQKLH).

The protein belongs to the krueppel C2H2-type zinc-finger protein family.

It localises to the nucleus. In terms of biological role, RNA-interacting protein with a high number of miRNA targets. Acts as a damage-induced regulator of muscle remodeling by mediating the interferon gamma response in muscle cells. In Homo sapiens (Human), this protein is Zinc finger protein 697.